Consider the following 227-residue polypeptide: Cytochrome c oxidase subunit 2 (227 aa).

The Mitochondrial intermembrane portion of the chain corresponds to 1 to 14; sequence MAHAAQVGLQDATS. The helical transmembrane segment at 15 to 45 threads the bilayer; sequence PIMEELITFHDHALMIIFLICFLVLYALFLT. The Mitochondrial matrix segment spans residues 46–59; that stretch reads LTTKLTSTNISDAQ. A helical membrane pass occupies residues 60 to 87; the sequence is EMETIWTILPAIILVLIALPSLRILYMT. Residues 88-227 lie on the Mitochondrial intermembrane side of the membrane; it reads DEINDPSFTI…IFEMGPVFAL (140 aa). Cu cation contacts are provided by His-161, Cys-196, Glu-198, Cys-200, His-204, and Met-207. Glu-198 is a binding site for Mg(2+).

Belongs to the cytochrome c oxidase subunit 2 family. As to quaternary structure, component of the cytochrome c oxidase (complex IV, CIV), a multisubunit enzyme composed of 14 subunits. The complex is composed of a catalytic core of 3 subunits MT-CO1, MT-CO2 and MT-CO3, encoded in the mitochondrial DNA, and 11 supernumerary subunits COX4I, COX5A, COX5B, COX6A, COX6B, COX6C, COX7A, COX7B, COX7C, COX8 and NDUFA4, which are encoded in the nuclear genome. The complex exists as a monomer or a dimer and forms supercomplexes (SCs) in the inner mitochondrial membrane with NADH-ubiquinone oxidoreductase (complex I, CI) and ubiquinol-cytochrome c oxidoreductase (cytochrome b-c1 complex, complex III, CIII), resulting in different assemblies (supercomplex SCI(1)III(2)IV(1) and megacomplex MCI(2)III(2)IV(2)). Found in a complex with TMEM177, COA6, COX18, COX20, SCO1 and SCO2. Interacts with TMEM177 in a COX20-dependent manner. Interacts with COX20. Interacts with COX16. It depends on Cu cation as a cofactor.

Its subcellular location is the mitochondrion inner membrane. The catalysed reaction is 4 Fe(II)-[cytochrome c] + O2 + 8 H(+)(in) = 4 Fe(III)-[cytochrome c] + 2 H2O + 4 H(+)(out). Its function is as follows. Component of the cytochrome c oxidase, the last enzyme in the mitochondrial electron transport chain which drives oxidative phosphorylation. The respiratory chain contains 3 multisubunit complexes succinate dehydrogenase (complex II, CII), ubiquinol-cytochrome c oxidoreductase (cytochrome b-c1 complex, complex III, CIII) and cytochrome c oxidase (complex IV, CIV), that cooperate to transfer electrons derived from NADH and succinate to molecular oxygen, creating an electrochemical gradient over the inner membrane that drives transmembrane transport and the ATP synthase. Cytochrome c oxidase is the component of the respiratory chain that catalyzes the reduction of oxygen to water. Electrons originating from reduced cytochrome c in the intermembrane space (IMS) are transferred via the dinuclear copper A center (CU(A)) of subunit 2 and heme A of subunit 1 to the active site in subunit 1, a binuclear center (BNC) formed by heme A3 and copper B (CU(B)). The BNC reduces molecular oxygen to 2 water molecules using 4 electrons from cytochrome c in the IMS and 4 protons from the mitochondrial matrix. This chain is Cytochrome c oxidase subunit 2 (MT-CO2), found in Gorilla gorilla gorilla (Western lowland gorilla).